A 779-amino-acid chain; its full sequence is Phosphoribosylformylglycinamidine synthase subunit PurL (779 aa).

His52 is an active-site residue. ATP is bound by residues Tyr55 and Lys94. Glu96 is a binding site for Mg(2+). Residues 97-100 and Arg119 contribute to the substrate site; that span reads SHNH. Residue His98 is the Proton acceptor of the active site. Asp120 is a Mg(2+) binding site. Position 243 (Gln243) interacts with substrate. Residue Asp271 coordinates Mg(2+). Position 315–317 (315–317) interacts with substrate; it reads ESQ. The ATP site is built by Asn523 and Gly560. Residue Asn561 coordinates Mg(2+). Ser563 is a substrate binding site.

The protein belongs to the FGAMS family. Monomer. Part of the FGAM synthase complex composed of 1 PurL, 1 PurQ and 2 PurS subunits.

The protein resides in the cytoplasm. It carries out the reaction N(2)-formyl-N(1)-(5-phospho-beta-D-ribosyl)glycinamide + L-glutamine + ATP + H2O = 2-formamido-N(1)-(5-O-phospho-beta-D-ribosyl)acetamidine + L-glutamate + ADP + phosphate + H(+). The protein operates within purine metabolism; IMP biosynthesis via de novo pathway; 5-amino-1-(5-phospho-D-ribosyl)imidazole from N(2)-formyl-N(1)-(5-phospho-D-ribosyl)glycinamide: step 1/2. Its function is as follows. Part of the phosphoribosylformylglycinamidine synthase complex involved in the purines biosynthetic pathway. Catalyzes the ATP-dependent conversion of formylglycinamide ribonucleotide (FGAR) and glutamine to yield formylglycinamidine ribonucleotide (FGAM) and glutamate. The FGAM synthase complex is composed of three subunits. PurQ produces an ammonia molecule by converting glutamine to glutamate. PurL transfers the ammonia molecule to FGAR to form FGAM in an ATP-dependent manner. PurS interacts with PurQ and PurL and is thought to assist in the transfer of the ammonia molecule from PurQ to PurL. This chain is Phosphoribosylformylglycinamidine synthase subunit PurL, found in Prochlorococcus marinus (strain MIT 9301).